The primary structure comprises 28 residues: Potassium channel toxin alpha-KTx 9.3 (28 aa).

3 cysteine pairs are disulfide-bonded: Cys3/Cys19, Cys6/Cys24, and Cys10/Cys26.

This sequence belongs to the short scorpion toxin superfamily. Potassium channel inhibitor family. Alpha-KTx 09 subfamily. As to expression, expressed by the venom gland.

The protein resides in the secreted. In terms of biological role, inhibits voltage-gated potassium channels. The chain is Potassium channel toxin alpha-KTx 9.3 from Aegaeobuthus nigrocinctus (Scorpion).